A 784-amino-acid chain; its full sequence is LPS-assembly protein LptD (784 aa).

An N-terminal signal peptide occupies residues 1–24; sequence MKKRIPTLLATMIATALYSQQGLA. 2 cysteine pairs are disulfide-bonded: cysteine 31–cysteine 724 and cysteine 173–cysteine 725.

Belongs to the LptD family. As to quaternary structure, component of the lipopolysaccharide transport and assembly complex. Interacts with LptE and LptA. May interact with LptE during assembly of LptD by the beta-barrel assembly machine (BAM). Also interacts with LptM, which promotes the efficient assembly of the LptDE translocon by the BAM complex. In terms of processing, contains two intramolecular disulfide bonds. At least one disulfide bond is required for activity, and protein is probably fully oxidized in vivo.

The protein resides in the cell outer membrane. Together with LptE, is involved in the assembly of lipopolysaccharide (LPS) at the surface of the outer membrane. Contributes to n-hexane resistance. The protein is LPS-assembly protein LptD of Escherichia coli (strain K12).